The sequence spans 135 residues: NADH-quinone oxidoreductase subunit K (135 aa).

3 helical membrane passes run Val-33 to Gly-53, Phe-63 to Val-83, and Ile-95 to Leu-115.

Belongs to the complex I subunit 4L family. As to quaternary structure, NDH-1 is composed of 14 different subunits. Subunits NuoA, H, J, K, L, M, N constitute the membrane sector of the complex.

It localises to the cell inner membrane. It carries out the reaction a quinone + NADH + 5 H(+)(in) = a quinol + NAD(+) + 4 H(+)(out). Functionally, NDH-1 shuttles electrons from NADH, via FMN and iron-sulfur (Fe-S) centers, to quinones in the respiratory chain. The immediate electron acceptor for the enzyme in this species is believed to be ubiquinone. Couples the redox reaction to proton translocation (for every two electrons transferred, four hydrogen ions are translocated across the cytoplasmic membrane), and thus conserves the redox energy in a proton gradient. This chain is NADH-quinone oxidoreductase subunit K, found in Psychrobacter arcticus (strain DSM 17307 / VKM B-2377 / 273-4).